Consider the following 262-residue polypeptide: Hydroxyethylthiazole kinase (262 aa).

Residue Met-43 participates in substrate binding. The ATP site is built by Arg-118 and Thr-164. Ala-191 serves as a coordination point for substrate.

Belongs to the Thz kinase family. Requires Mg(2+) as cofactor.

The enzyme catalyses 5-(2-hydroxyethyl)-4-methylthiazole + ATP = 4-methyl-5-(2-phosphooxyethyl)-thiazole + ADP + H(+). Its pathway is cofactor biosynthesis; thiamine diphosphate biosynthesis; 4-methyl-5-(2-phosphoethyl)-thiazole from 5-(2-hydroxyethyl)-4-methylthiazole: step 1/1. Its function is as follows. Catalyzes the phosphorylation of the hydroxyl group of 4-methyl-5-beta-hydroxyethylthiazole (THZ). This chain is Hydroxyethylthiazole kinase, found in Cereibacter sphaeroides (strain ATCC 17029 / ATH 2.4.9) (Rhodobacter sphaeroides).